Reading from the N-terminus, the 138-residue chain is Nucleoside diphosphate kinase (138 aa).

ATP is bound by residues Lys-9, Phe-57, Arg-85, Thr-91, Arg-102, and Asn-112. His-115 functions as the Pros-phosphohistidine intermediate in the catalytic mechanism.

This sequence belongs to the NDK family. As to quaternary structure, homotetramer. Mg(2+) is required as a cofactor.

Its subcellular location is the cytoplasm. The catalysed reaction is a 2'-deoxyribonucleoside 5'-diphosphate + ATP = a 2'-deoxyribonucleoside 5'-triphosphate + ADP. The enzyme catalyses a ribonucleoside 5'-diphosphate + ATP = a ribonucleoside 5'-triphosphate + ADP. Major role in the synthesis of nucleoside triphosphates other than ATP. The ATP gamma phosphate is transferred to the NDP beta phosphate via a ping-pong mechanism, using a phosphorylated active-site intermediate. The sequence is that of Nucleoside diphosphate kinase from Exiguobacterium sibiricum (strain DSM 17290 / CCUG 55495 / CIP 109462 / JCM 13490 / 255-15).